The primary structure comprises 176 residues: MFHATTIVAVKKGEQVAMAGDGQVTMGQATVMKHKARKVRRLFHGKVLAGFAGSVADAFTLFEKFENKLEEYQGNLQRAAVELAKDWRMDKALRNLEALLIVADKQSMLLISGSGEVIEPDDGIAAIGSGGNYALAAARALVKNTDLQPAQLVQEAMEVASSICVYTNDQIIVEEL.

Residue T5 is part of the active site. Residues S161, C164, and T167 each contribute to the Na(+) site.

Belongs to the peptidase T1B family. HslV subfamily. As to quaternary structure, a double ring-shaped homohexamer of HslV is capped on each side by a ring-shaped HslU homohexamer. The assembly of the HslU/HslV complex is dependent on binding of ATP.

Its subcellular location is the cytoplasm. The enzyme catalyses ATP-dependent cleavage of peptide bonds with broad specificity.. With respect to regulation, allosterically activated by HslU binding. Functionally, protease subunit of a proteasome-like degradation complex believed to be a general protein degrading machinery. This is ATP-dependent protease subunit HslV from Desulfitobacterium hafniense (strain Y51).